The following is a 58-amino-acid chain: Large ribosomal subunit protein uL30 (58 aa).

The protein belongs to the universal ribosomal protein uL30 family. Part of the 50S ribosomal subunit.

The chain is Large ribosomal subunit protein uL30 from Pseudomonas savastanoi pv. phaseolicola (strain 1448A / Race 6) (Pseudomonas syringae pv. phaseolicola (strain 1448A / Race 6)).